Reading from the N-terminus, the 133-residue chain is Ribosome-binding factor A (133 aa).

The protein belongs to the RbfA family. In terms of assembly, monomer. Binds 30S ribosomal subunits, but not 50S ribosomal subunits or 70S ribosomes.

The protein localises to the cytoplasm. Functionally, one of several proteins that assist in the late maturation steps of the functional core of the 30S ribosomal subunit. Associates with free 30S ribosomal subunits (but not with 30S subunits that are part of 70S ribosomes or polysomes). Required for efficient processing of 16S rRNA. May interact with the 5'-terminal helix region of 16S rRNA. The sequence is that of Ribosome-binding factor A from Synechocystis sp. (strain ATCC 27184 / PCC 6803 / Kazusa).